The following is a 303-amino-acid chain: Oxygen-dependent coproporphyrinogen-III oxidase (303 aa).

A substrate-binding site is contributed by Ser-93. A divalent metal cation is bound by residues His-97 and His-107. The Proton donor role is filled by His-107. A substrate-binding site is contributed by 109–111 (NVR). Residues His-149 and His-179 each coordinate a divalent metal cation. Positions 244–279 (YVEFNLVFDRGTLFGLQSGGRTESILLSMPPMAQWR) are important for dimerization. 262–264 (GGR) is a binding site for substrate.

This sequence belongs to the aerobic coproporphyrinogen-III oxidase family. In terms of assembly, homodimer. It depends on a divalent metal cation as a cofactor.

The protein resides in the cytoplasm. It carries out the reaction coproporphyrinogen III + O2 + 2 H(+) = protoporphyrinogen IX + 2 CO2 + 2 H2O. The protein operates within porphyrin-containing compound metabolism; protoporphyrin-IX biosynthesis; protoporphyrinogen-IX from coproporphyrinogen-III (O2 route): step 1/1. Involved in the heme biosynthesis. Catalyzes the aerobic oxidative decarboxylation of propionate groups of rings A and B of coproporphyrinogen-III to yield the vinyl groups in protoporphyrinogen-IX. The polypeptide is Oxygen-dependent coproporphyrinogen-III oxidase (Bordetella petrii (strain ATCC BAA-461 / DSM 12804 / CCUG 43448)).